Reading from the N-terminus, the 928-residue chain is Arf guanine nucleotide exchange factor sec74 (928 aa).

Composition is skewed to polar residues over residues 1-12 (MDESSRIASSSA) and 57-83 (TITSDTPKVSSQHSPVSSAYTGDSTTD). Disordered stretches follow at residues 1–152 (MDES…RPSS) and 227–249 (SLSSNFSARTPASNQSSVSEDFG). The residue at position 67 (serine 67) is a Phosphoserine. 2 stretches are compositionally biased toward low complexity: residues 89–102 (GHSSSQKLSNKVSS) and 115–132 (SKSSSSQCSSPFLPTSSS). The SEC7 domain occupies 228–420 (LSSNFSARTP…ECFYDNITYT (193 aa)). Residues 234–245 (ARTPASNQSSVS) are compositionally biased toward polar residues. A PH domain is found at 548–677 (KVFKLGILIQ…WLVKINFVST (130 aa)).

The protein localises to the cytoplasm. Its subcellular location is the cell tip. Functionally, guanine nucleotide exchange factor for Arf GTPases, stimulating the nucleotide exchange from the GDP-bound to the GTP-bound form. Involved in vesicular transport. The polypeptide is Arf guanine nucleotide exchange factor sec74 (sec74) (Schizosaccharomyces pombe (strain 972 / ATCC 24843) (Fission yeast)).